Consider the following 281-residue polypeptide: Acetyl-coenzyme A carboxylase carboxyl transferase subunit beta (281 aa).

A CoA carboxyltransferase N-terminal domain is found at 24 to 281 (GLWYKSPKGK…TKLLTMLANN (258 aa)).

It belongs to the AccD/PCCB family. In terms of assembly, acetyl-CoA carboxylase is a heterohexamer composed of biotin carboxyl carrier protein (AccB), biotin carboxylase (AccC) and two subunits each of ACCase subunit alpha (AccA) and ACCase subunit beta (AccD).

The protein localises to the cytoplasm. It catalyses the reaction N(6)-carboxybiotinyl-L-lysyl-[protein] + acetyl-CoA = N(6)-biotinyl-L-lysyl-[protein] + malonyl-CoA. Its pathway is lipid metabolism; malonyl-CoA biosynthesis; malonyl-CoA from acetyl-CoA: step 1/1. Its function is as follows. Component of the acetyl coenzyme A carboxylase (ACC) complex. Biotin carboxylase (BC) catalyzes the carboxylation of biotin on its carrier protein (BCCP) and then the CO(2) group is transferred by the transcarboxylase to acetyl-CoA to form malonyl-CoA. The protein is Acetyl-coenzyme A carboxylase carboxyl transferase subunit beta of Amoebophilus asiaticus (strain 5a2).